A 705-amino-acid polypeptide reads, in one-letter code: Elongation factor G (705 aa).

A tr-type G domain is found at 8–290 (AYYRNIGISA…AVIEYLPAPT (283 aa)). Residues 17–24 (AHIDAGKT), 88–92 (DTPGH), and 142–145 (NKMD) each bind GTP.

Belongs to the TRAFAC class translation factor GTPase superfamily. Classic translation factor GTPase family. EF-G/EF-2 subfamily.

It localises to the cytoplasm. Functionally, catalyzes the GTP-dependent ribosomal translocation step during translation elongation. During this step, the ribosome changes from the pre-translocational (PRE) to the post-translocational (POST) state as the newly formed A-site-bound peptidyl-tRNA and P-site-bound deacylated tRNA move to the P and E sites, respectively. Catalyzes the coordinated movement of the two tRNA molecules, the mRNA and conformational changes in the ribosome. This is Elongation factor G from Baumannia cicadellinicola subsp. Homalodisca coagulata.